The chain runs to 82 residues: Penaeidin-3h (82 aa).

Positions 1-19 (MRLVVCLVFLASFALVCQG) are cleaved as a signal peptide. Gln20 is subject to Pyrrolidone carboxylic acid. Intrachain disulfides connect Cys55–Cys73 and Cys67–Cys74. At Ser81 the chain carries Serine amide.

This sequence belongs to the penaeidin family.

The protein localises to the cytoplasmic granule. In terms of biological role, antibacterial and antifungal activity. Presents chitin-binding activity. The chain is Penaeidin-3h from Penaeus vannamei (Whiteleg shrimp).